Consider the following 442-residue polypeptide: Proline--tRNA ligase (442 aa).

It belongs to the class-II aminoacyl-tRNA synthetase family. ProS type 2 subfamily. In terms of assembly, homodimer.

The protein resides in the cytoplasm. The catalysed reaction is tRNA(Pro) + L-proline + ATP = L-prolyl-tRNA(Pro) + AMP + diphosphate. In terms of biological role, catalyzes the attachment of proline to tRNA(Pro) in a two-step reaction: proline is first activated by ATP to form Pro-AMP and then transferred to the acceptor end of tRNA(Pro). This is Proline--tRNA ligase from Rhizobium meliloti (strain 1021) (Ensifer meliloti).